Here is a 432-residue protein sequence, read N- to C-terminus: Tyrosine--tRNA ligase (432 aa).

Positions 46–55 (PTRPDLHLGH) match the 'HIGH' region motif. A 'KMSKS' region motif is present at residues 232–236 (KMSKS). ATP is bound at residue K235. The region spanning 369–430 (IWVARLFTLA…GKDRFVRVRL (62 aa)) is the S4 RNA-binding domain.

This sequence belongs to the class-I aminoacyl-tRNA synthetase family. TyrS type 2 subfamily. In terms of assembly, homodimer.

The protein resides in the cytoplasm. It carries out the reaction tRNA(Tyr) + L-tyrosine + ATP = L-tyrosyl-tRNA(Tyr) + AMP + diphosphate + H(+). Functionally, catalyzes the attachment of tyrosine to tRNA(Tyr) in a two-step reaction: tyrosine is first activated by ATP to form Tyr-AMP and then transferred to the acceptor end of tRNA(Tyr). The polypeptide is Tyrosine--tRNA ligase (Thermus thermophilus (strain ATCC BAA-163 / DSM 7039 / HB27)).